The chain runs to 93 residues: Mitochondrial import inner membrane translocase subunit TIM10 (93 aa).

The interval 1 to 31 is interaction with transmembrane regions of transmembrane proteins in transit; it reads MSFLGFGGGQPQLSSQQKIQAAEAELDLVTD. The short motif at 40–65 is the Twin CX3C motif element; sequence CYKKCINTSYSEGELNKNESSCLDRC. 2 disulfide bridges follow: C40–C65 and C44–C61. Residues 73–93 are required for heterohexamerization; sequence NVQVGENMQKMGQSFNAAGKF.

The protein belongs to the small Tim family. As to quaternary structure, heterohexamer; composed of 3 copies of TIM9 and 3 copies of TIM10, named soluble 70 kDa complex. Associates directly with the TIM12 component of the TIM22 complex, whose core is composed of TIM18, TIM22 and TIM54. Interacts with the transmembrane regions of multi-pass transmembrane proteins in transit.

It is found in the mitochondrion inner membrane. Its subcellular location is the mitochondrion intermembrane space. In terms of biological role, mitochondrial intermembrane chaperone that participates in the import and insertion of multi-pass transmembrane proteins into the mitochondrial inner membrane. Also required for the transfer of beta-barrel precursors from the TOM complex to the sorting and assembly machinery (SAM complex) of the outer membrane. Acts as a chaperone-like protein that protects the hydrophobic precursors from aggregation and guide them through the mitochondrial intermembrane space. Compared to TIM9, it may function as a substrate sensor. In Saccharomyces cerevisiae (strain ATCC 204508 / S288c) (Baker's yeast), this protein is Mitochondrial import inner membrane translocase subunit TIM10 (TIM10).